Consider the following 954-residue polypeptide: MKLSKIKKVLSGTVSALMIASAAPVVASAADQQTRGNVGGYDYEMWNQNGQGQASMNPGAGSFTCSWSNIENFLARMGKNYDSQKKNYKAFGNIVLTYDVEYTPRGNSYMCVYGWTRNPLMEYYIVEGWGDWRPPGNDGEVKGTVSANGNTYDIRKTMRYNQPSLDGTATFPQYWSVRQTSGSANNQTNYMKGTIDVTKHFDAWSAAGLDMSGTLYEVSLNIEGYRSNGSANVKSVSVTQGGSSDNGGQQQNNDWNQQNNNQQQNNDWNNWGQQNNDWNQWNNQGQQNNDWNNWGQQNNDWNQWNNQGQQQNNDWNNWGQQNNDWNQWNNQGQQQNNDWNNWGQQNNDWNQWNNQGQQQNNDWNNWGQQNNDWNQWNNQNNNQQNAWNGWDNNNNWNQNNQQQNNWDWNNQNNWNNNQQQNNDWNQWNNQNNWNNNQQQNNDWNQWNNQGQQNNDWNQWNNQNNWNQNNNQQNAWNGWDNNNNWNQWDQNNQWNNQQQNNTWDWNNQNNWNNNQQNNDWNQWNNQGQQQNNDWNQWNNQNNNQNNGWDWNNQNNWNQNNNQQNAWNGWDNNNNWNQWGGQNNDWNNQQQNNDWNQWNNQGQQQNNDWNNQNNWNQGQQNNNNSAGSSDSLKGAFSKYFKIGTSVSPHELNSGADFLKKHYNSITPENELKPESILDQGACQQKGNNVNTQISLSRAAQTLKFCEQNGIALRGHTFVWYSQTPDWFFRENFSQNGAYVSKDIMNQRLESMIKNTFAALKSQYPNLDVYSYDVCNELFLNNGGGMRGADNSNWVKIYGDDSFVINAFKYARQYAPAGCKLYLNDYNEYIPAKTNDIYNMAMKLKQLGYIDGIGMQSHLATNYPDANTYETALKKFLSTGLEVQITELDITCTNSAEQADLYEKIFKLAMQNSAQIPAVTIWGTQDTVSWRSSQNPLLFSAGYQPKPAYDRVMALAK.

A signal peptide (or 28, or 29) is located at residues 1–27 (MKLSKIKKVLSGTVSALMIASAAPVVA). A GH11 domain is found at 29–236 (AADQQTRGNV…SNGSANVKSV (208 aa)). The Nucleophile role is filled by E122. E223 acts as the Proton donor in catalysis. A compositionally biased stretch (polar residues) spans 233–243 (VKSVSVTQGGS). Residues 233-628 (VKSVSVTQGG…NNNNSAGSSD (396 aa)) form a disordered region. Residues 246–622 (NGGQQQNNDW…WNQGQQNNNN (377 aa)) are compositionally biased toward low complexity. Residues 624–952 (AGSSDSLKGA…KPAYDRVMAL (329 aa)) enclose the GH10 domain. E774 serves as the catalytic Proton donor. E884 acts as the Nucleophile in catalysis.

The protein in the N-terminal section; belongs to the glycosyl hydrolase 11 (cellulase G) family. This sequence in the C-terminal section; belongs to the glycosyl hydrolase 10 (cellulase F) family.

It carries out the reaction Endohydrolysis of (1-&gt;4)-beta-D-xylosidic linkages in xylans.. It functions in the pathway glycan degradation; xylan degradation. Functionally, xylanase domain releases more xylo-oligosaccharides and GH10 domain more xylose. The polypeptide is Bifunctional endo-1,4-beta-xylanase XylA (xynA) (Ruminococcus flavefaciens).